The following is a 127-amino-acid chain: MASRQPSEGSTVLISLILWVIIFALLNIGSNFFRSSEGATILGGFVGSFLFFLQMTFIGAIKRDVKLLETVLAVIITAMISSSVHRVSGTTSIIFSIGWIFYLNHASTKIYSKLEETNTVVSGKKRK.

4 consecutive transmembrane segments (helical) span residues 13 to 33, 41 to 61, 65 to 85, and 87 to 107; these read LISLILWVIIFALLNIGSNFF, ILGGFVGSFLFFLQMTFIGAI, VKLLETVLAVIITAMISSSVH, and VSGTTSIIFSIGWIFYLNHAS.

This sequence belongs to the KRTCAP2 family. Component of the oligosaccharyltransferase (OST) complex.

The protein resides in the membrane. Functionally, subunit of the oligosaccharyl transferase (OST) complex that catalyzes the initial transfer of a defined glycan (Glc(3)Man(9)GlcNAc(2) in eukaryotes) from the lipid carrier dolichol-pyrophosphate to an asparagine residue within an Asn-X-Ser/Thr consensus motif in nascent polypeptide chains, the first step in protein N-glycosylation. N-glycosylation occurs cotranslationally and the complex associates with the Sec61 complex at the channel-forming translocon complex that mediates protein translocation across the endoplasmic reticulum (ER). All subunits are required for a maximal enzyme activity. The polypeptide is Protein KRTCAP2 homolog (Dictyostelium discoideum (Social amoeba)).